The primary structure comprises 406 residues: Gustatory receptor for sugar taste 64b (406 aa).

Over 1–47 the chain is Cytoplasmic; that stretch reads MPQGETFHRAVSNVLFISQIYGLLPVSNVRALDVADIRFRWCSPRIL. Residues 48 to 68 form a helical membrane-spanning segment; the sequence is YSLLIGILNLSEFGAVINYVI. At 69–79 the chain is on the extracellular side; it reads KVTINFHTSST. The helical transmembrane segment at 80 to 100 threads the bilayer; sequence LSLYIVCLLEHLFFWRLAIQW. Residues 101 to 130 lie on the Cytoplasmic side of the membrane; it reads PRIMRTWHGVEQLFLRVPYRFYGEYRIKRR. A helical membrane pass occupies residues 131-151; the sequence is IYIVFTIVMSSALVEHCLLLG. Over 152–183 the chain is Extracellular; the sequence is NSFHLSNMERTQCKINVTYFESIYKWERPHLY. Residue N167 is glycosylated (N-linked (GlcNAc...) asparagine). A helical membrane pass occupies residues 184–204; sequence MILPYHFWMLPILEWVNQTIA. Residues 205–265 lie on the Cytoplasmic side of the membrane; that stretch reads YPRSFTDCFI…KRLVHLLDAA (61 aa). A helical transmembrane segment spans residues 266 to 286; that stretch reads IAPLVLLAFGNNMSFICFQLF. Over 287 to 290 the chain is Extracellular; sequence NSFK. The chain crosses the membrane as a helical span at residues 291-311; that stretch reads NIGVDFLVMLAFWYSLGFAVV. Topologically, residues 312-370 are cytoplasmic; the sequence is RTLLTIFVASSINDYERKIVTALRDVPSRAWSIEVQRFSEQLGNDTTALSGSGFFYLTR. The helical transmembrane segment at 371–391 threads the bilayer; that stretch reads SLVLAMGTTIITYELMISDVI. The Extracellular portion of the chain corresponds to 392-406; sequence NQGSIRQKTQYCREY.

It belongs to the insect chemoreceptor superfamily. Gustatory receptor (GR) family. Gr5a subfamily. In terms of tissue distribution, expressed in Gr5a-expressing sugar-sensing cells.

It is found in the cell membrane. Functionally, one of the few identified sugar gustatory receptors identified so far and which promotes the starvation-induced increase of feeding motivation. The sequence is that of Gustatory receptor for sugar taste 64b (Gr64b) from Drosophila melanogaster (Fruit fly).